The sequence spans 376 residues: uncharacterized protein (376 aa).

This sequence belongs to the YCR102c/YLR460c/YNL134c family.

This is an uncharacterized protein from Saccharomyces cerevisiae (strain ATCC 204508 / S288c) (Baker's yeast).